A 314-amino-acid polypeptide reads, in one-letter code: UDP-N-acetylenolpyruvoylglucosamine reductase (314 aa).

The FAD-binding PCMH-type domain occupies 31–208; the sequence is RIGGPADYYA…LSARFRLTPK (178 aa). The active site involves R187. S237 acts as the Proton donor in catalysis. E307 is a catalytic residue.

It belongs to the MurB family. Requires FAD as cofactor.

It is found in the cytoplasm. The enzyme catalyses UDP-N-acetyl-alpha-D-muramate + NADP(+) = UDP-N-acetyl-3-O-(1-carboxyvinyl)-alpha-D-glucosamine + NADPH + H(+). Its pathway is cell wall biogenesis; peptidoglycan biosynthesis. Cell wall formation. In Agathobacter rectalis (strain ATCC 33656 / DSM 3377 / JCM 17463 / KCTC 5835 / VPI 0990) (Eubacterium rectale), this protein is UDP-N-acetylenolpyruvoylglucosamine reductase.